Reading from the N-terminus, the 116-residue chain is Large ribosomal subunit protein bL17 (116 aa).

It belongs to the bacterial ribosomal protein bL17 family. Part of the 50S ribosomal subunit. Contacts protein L32.

The protein is Large ribosomal subunit protein bL17 of Prochlorococcus marinus (strain MIT 9211).